The following is a 305-amino-acid chain: Translation initiation factor eIF2B subunit alpha (305 aa).

K35 carries the N6-acetyllysine modification.

The protein belongs to the eIF-2B alpha/beta/delta subunits family. Component of the translation initiation factor 2B (eIF2B) complex which is a heterodecamer of two sets of five different subunits: alpha, beta, gamma, delta and epsilon. Subunits alpha, beta and delta comprise a regulatory subcomplex and subunits epsilon and gamma comprise a catalytic subcomplex. Within the complex, the hexameric regulatory complex resides at the center, with the two heterodimeric catalytic subcomplexes bound on opposite sides.

It localises to the cytoplasm. The protein resides in the cytosol. Its activity is regulated as follows. Activated by the chemical integrated stress response (ISR) inhibitor ISRIB which stimulates guanine nucleotide exchange factor activity for both phosphorylated and unphosphorylated eIF2. Acts as a component of the translation initiation factor 2B (eIF2B) complex, which catalyzes the exchange of GDP for GTP on eukaryotic initiation factor 2 (eIF2) gamma subunit. Its guanine nucleotide exchange factor activity is repressed when bound to eIF2 complex phosphorylated on the alpha subunit, thereby limiting the amount of methionyl-initiator methionine tRNA available to the ribosome and consequently global translation is repressed. This is Translation initiation factor eIF2B subunit alpha (Eif2b1) from Mus musculus (Mouse).